An 86-amino-acid polypeptide reads, in one-letter code: Large ribosomal subunit protein bL27 (86 aa).

It belongs to the bacterial ribosomal protein bL27 family.

The polypeptide is Large ribosomal subunit protein bL27 (Cupriavidus metallidurans (strain ATCC 43123 / DSM 2839 / NBRC 102507 / CH34) (Ralstonia metallidurans)).